A 514-amino-acid chain; its full sequence is Leucine-rich repeat-containing protein 14B (514 aa).

An LRR 1; degenerate repeat occupies 104–141; sequence RRRLRVADLTGIRDVQVQRCPCGRALGRWGRTQLLART. The LRR 2; degenerate repeat unit spans residues 185 to 209; it reads RVHCPSFRADSLSPSQLLHVLRLAG. The stretch at 238–277 is one LRR 4; degenerate repeat; it reads FPRLASLTLPTKAFDAPPTYASTPDGEDPLLASIARELSK. LRR repeat units lie at residues 278–302, 303–334, 335–350, 359–386, and 387–411; these read MAQL…LGPL, QTPL…AHLE, VLDL…YPST, SRTL…GLSP, and CHRL…LFTA.

Belongs to the PRAME family. LRRC14 subfamily.

The sequence is that of Leucine-rich repeat-containing protein 14B from Homo sapiens (Human).